The following is a 247-amino-acid chain: MSRKSTGAFLVILLLSMAAGGAVGAADDPYGAARAKMVREIEEDARRTSERIGKTALDPRVMEIMARVPRHEFVPAAERAYAYENRPLPIGYGQTISQPYIVAVMTDLLKVGSESTVLEVGTGSGYQAAILAEFVRSVYSIEIIEALAETAAERLKRLGYDNVRVRTGDGYHGWKEHAPFDGIVVTAAAGHIPPPLLDQLKPGGRMIIPVGGPFFVQQLMLVEKDEQGRTRTRQILPVAFVPLTGGH.

Residue S97 is part of the active site.

This sequence belongs to the methyltransferase superfamily. L-isoaspartyl/D-aspartyl protein methyltransferase family.

The protein resides in the cytoplasm. It carries out the reaction [protein]-L-isoaspartate + S-adenosyl-L-methionine = [protein]-L-isoaspartate alpha-methyl ester + S-adenosyl-L-homocysteine. In terms of biological role, catalyzes the methyl esterification of L-isoaspartyl residues in peptides and proteins that result from spontaneous decomposition of normal L-aspartyl and L-asparaginyl residues. It plays a role in the repair and/or degradation of damaged proteins. In Syntrophobacter fumaroxidans (strain DSM 10017 / MPOB), this protein is Protein-L-isoaspartate O-methyltransferase 2.